The primary structure comprises 660 residues: Pro-secreted protein ORF2 (660 aa).

The signal sequence occupies residues 1–19 (MRPRPILLLLLMFLPMLPA). 2 disordered regions span residues 18–43 (PAPP…GFWG) and 66–127 (VTAA…DVDS). The short motif at 28–33 (RRRGRR) is the Nuclear localization signal element. Low complexity predominate over residues 103 to 116 (TTAGAAPLTAVAPA). 2 N-linked (GlcNAc...) asparagine; by host glycosylation sites follow: Asn137 and Asn310. The particle formation stretch occupies residues 368 to 394 (IALTLFNLADTLLGGLPTELISSAGGQ). Residue Asn562 is glycosylated (N-linked (GlcNAc...) asparagine; by host). The tract at residues 585 to 610 (TTSLGAGPVSISAVAVLAPHSALALL) is oligomerization.

This sequence belongs to the hepevirus capsid protein family. As to quaternary structure, homodimer. Self-assembles to form the capsid. The capsid is dominated by dimers that define the 30 morphological units. Interacts with phosphorylated protein ORF3. Interacts with host TMEM134. Interacts with host ASGR1 and ASGR2; these interactions facilitate infection of host hepatocytes. Post-translationally, cleaved by host protease in the N-terminus. In terms of processing, N-glycosylated. Not N-glycosylated. The C-terminus of the capsid protein ORF2 is truncated in non-enveloped virions shedded in feces, probably due to host proteases.

The protein resides in the secreted. Its subcellular location is the virion. It is found in the host cytoplasm. It localises to the host endoplasmic reticulum. The protein localises to the host Golgi apparatus. The protein resides in the host cell surface. Its subcellular location is the host nucleus. In terms of biological role, plays a role in the inhibition of host antibody-mediated neutralization without blocking viral cell entry. Its function is as follows. Forms an icosahedral capsid with a T=1 symmetry and a 34 nm diameter. The capsid is composed of 60 copies linked to each other. Binds to the 5' end of the genomic RNA to mediate genome encapsidation. Binds to heparin surface proteoglycans (HSPGs) to mediate viral entry. Additionally, the interactions with host ASGR1 and ASGR2 facilitate viral infection of hepatocytes. Inhibits IFN production by blocking host TBK1-induced IRF3 phosphorylation. The nuclear form probably modulates host gene expression. This Hepatitis E virus genotype 1 (isolate Human/Burma) (HEV-1) protein is Pro-secreted protein ORF2.